Here is a 297-residue protein sequence, read N- to C-terminus: Ribosomal protein L11 methyltransferase (297 aa).

Positions 150, 171, 193, and 233 each coordinate S-adenosyl-L-methionine.

Belongs to the methyltransferase superfamily. PrmA family.

The protein localises to the cytoplasm. The catalysed reaction is L-lysyl-[protein] + 3 S-adenosyl-L-methionine = N(6),N(6),N(6)-trimethyl-L-lysyl-[protein] + 3 S-adenosyl-L-homocysteine + 3 H(+). Functionally, methylates ribosomal protein L11. This chain is Ribosomal protein L11 methyltransferase, found in Laribacter hongkongensis (strain HLHK9).